A 273-amino-acid polypeptide reads, in one-letter code: Putative pyruvate, phosphate dikinase regulatory protein (273 aa).

Gly-151–Thr-158 provides a ligand contact to ADP.

This sequence belongs to the pyruvate, phosphate/water dikinase regulatory protein family. PDRP subfamily.

It carries out the reaction N(tele)-phospho-L-histidyl/L-threonyl-[pyruvate, phosphate dikinase] + ADP = N(tele)-phospho-L-histidyl/O-phospho-L-threonyl-[pyruvate, phosphate dikinase] + AMP + H(+). The catalysed reaction is N(tele)-phospho-L-histidyl/O-phospho-L-threonyl-[pyruvate, phosphate dikinase] + phosphate + H(+) = N(tele)-phospho-L-histidyl/L-threonyl-[pyruvate, phosphate dikinase] + diphosphate. In terms of biological role, bifunctional serine/threonine kinase and phosphorylase involved in the regulation of the pyruvate, phosphate dikinase (PPDK) by catalyzing its phosphorylation/dephosphorylation. This Desulfitobacterium hafniense (strain DSM 10664 / DCB-2) protein is Putative pyruvate, phosphate dikinase regulatory protein.